The sequence spans 341 residues: Protein pelota homolog (341 aa).

It belongs to the eukaryotic release factor 1 family. Pelota subfamily. As to quaternary structure, monomer. It depends on a divalent metal cation as a cofactor.

The protein localises to the cytoplasm. Its function is as follows. May function in recognizing stalled ribosomes, interact with stem-loop structures in stalled mRNA molecules, and effect endonucleolytic cleavage of the mRNA. May play a role in the release non-functional ribosomes and degradation of damaged mRNAs. Has endoribonuclease activity. This chain is Protein pelota homolog, found in Methanoculleus marisnigri (strain ATCC 35101 / DSM 1498 / JR1).